A 427-amino-acid polypeptide reads, in one-letter code: Serine--tRNA ligase (427 aa).

Residue 231–233 (TAE) coordinates L-serine. ATP is bound at residue 262–264 (RSE). E285 contacts L-serine. An ATP-binding site is contributed by 349-352 (EISS). S385 is a binding site for L-serine.

It belongs to the class-II aminoacyl-tRNA synthetase family. Type-1 seryl-tRNA synthetase subfamily. As to quaternary structure, homodimer. The tRNA molecule binds across the dimer.

The protein resides in the cytoplasm. It carries out the reaction tRNA(Ser) + L-serine + ATP = L-seryl-tRNA(Ser) + AMP + diphosphate + H(+). The catalysed reaction is tRNA(Sec) + L-serine + ATP = L-seryl-tRNA(Sec) + AMP + diphosphate + H(+). It participates in aminoacyl-tRNA biosynthesis; selenocysteinyl-tRNA(Sec) biosynthesis; L-seryl-tRNA(Sec) from L-serine and tRNA(Sec): step 1/1. Functionally, catalyzes the attachment of serine to tRNA(Ser). Is also able to aminoacylate tRNA(Sec) with serine, to form the misacylated tRNA L-seryl-tRNA(Sec), which will be further converted into selenocysteinyl-tRNA(Sec). The polypeptide is Serine--tRNA ligase (Rhizobium leguminosarum bv. trifolii (strain WSM2304)).